The sequence spans 206 residues: Cytochrome c oxidase assembly factor 8 (206 aa).

The N-terminal 39 residues, 1-39, are a transit peptide targeting the mitochondrion; that stretch reads MLPCAAGARGRGAMVVLRAGKKTFLPPLCRAFACRGCQL.

Belongs to the COA8 family. Post-translationally, N-terminal mitochondrial targeting sequence is cleaved from the mature protein once in the mitochondrion. In normal conditions, the cytoplasmic precursor protein is rapidly degraded by the ubiquitination-proteasome system (UPS). Oxidative stress induces protein stabilization and import into mitochondria where it protects COX from degradation. In terms of tissue distribution, expressed in fibroblasts.

The protein localises to the mitochondrion inner membrane. Required for cytochrome c complex (COX) IV assembly and function Protects COX assembly from oxidation-induced degradation, COX being the terminal component of the mitochondrial respiratory chain. The sequence is that of Cytochrome c oxidase assembly factor 8 from Homo sapiens (Human).